The following is a 5263-amino-acid chain: Fibroin heavy chain (5263 aa).

The first 21 residues, methionine 1 to alanine 21, serve as a signal peptide directing secretion. The interval alanine 149–valine 5206 is highly repetitive. A disulfide bond links cysteine 5260 and cysteine 5263.

In terms of assembly, silk fibroin elementary unit consists in a disulfide-linked heavy and light chain and a p25 glycoprotein in molar ratios of 6:6:1. This results in a complex of approximately 2.3 MDa. In terms of processing, the interchain disulfide bridge is essential for the intracellular transport and secretion of fibroin. As to expression, produced exclusively in the posterior (PSG) section of silk glands, which are essentially modified salivary glands.

In terms of biological role, core component of the silk filament; a strong, insoluble and chemically inert fiber. The sequence is that of Fibroin heavy chain (FIBH) from Bombyx mori (Silk moth).